We begin with the raw amino-acid sequence, 224 residues long: ATP-dependent dethiobiotin synthetase BioD (224 aa).

12–17 (GVGKTF) provides a ligand contact to ATP. Thr-16 provides a ligand contact to Mg(2+). Lys-37 is a catalytic residue. Thr-41 contacts substrate. Glu-107 serves as a coordination point for Mg(2+). ATP is bound by residues 107-110 (EGAG), 167-168 (GS), 197-199 (PEG), and Glu-204.

This sequence belongs to the dethiobiotin synthetase family. As to quaternary structure, homodimer. Mg(2+) serves as cofactor.

The protein localises to the cytoplasm. The catalysed reaction is (7R,8S)-7,8-diammoniononanoate + CO2 + ATP = (4R,5S)-dethiobiotin + ADP + phosphate + 3 H(+). Its pathway is cofactor biosynthesis; biotin biosynthesis; biotin from 7,8-diaminononanoate: step 1/2. Functionally, catalyzes a mechanistically unusual reaction, the ATP-dependent insertion of CO2 between the N7 and N8 nitrogen atoms of 7,8-diaminopelargonic acid (DAPA, also called 7,8-diammoniononanoate) to form a ureido ring. This Corynebacterium glutamicum (strain R) protein is ATP-dependent dethiobiotin synthetase BioD.